Reading from the N-terminus, the 390-residue chain is MKLLGHKIELWAGLLLPDVSISGMSELRFPEEKPLLRGQDTEMESADTFLSAADTDWKEHDIETPYGMLHVVIRGTPKGNRPAILTYHDVGLNHKLCFNTFFNYEDMQEITKHFVVCHVDAPGQQVGASQFPQGYQYPTMDQLAAMLPSVMQHFGFQSIIAIGVGAGAYVLAKFALIFPELVEGMVLINIDPNGKGWIDWAASKISGLASSLPETVLSHLFSQEELMNNTELVQNYRQQISNCVNQSNLQLFWNMYNSRRDLEMSRPGTAPNAKTLRAPVMLVVGDNAPAEECVVECNSKLDPTNTTFLKMADSGGLPQVTQPGKLTEAFKYFLQGMGYMPSASMTRLARSRTASLTSASSVDGSRPRPCTQSESSDGIGQINHTMEVSC.

A disordered region spans residues 356–390 (LTSASSVDGSRPRPCTQSESSDGIGQINHTMEVSC). Polar residues predominate over residues 370–390 (CTQSESSDGIGQINHTMEVSC).

Belongs to the NDRG family.

The protein localises to the cytoplasm. Its subcellular location is the cytosol. Its function is as follows. Contributes to the maintenance of intracerebral BDNF levels within the normal range. May enhance growth factor-induced ERK1 and ERK2 phosphorylation. May attenuate growth factor-promoted ELK1 phosphorylation in a microtubule-dependent manner. The polypeptide is Protein NDRG4-A (ndrg4-a) (Xenopus laevis (African clawed frog)).